Consider the following 713-residue polypeptide: Ribosomal RNA large subunit methyltransferase K/L (713 aa).

The region spanning Leu43–Phe154 is the THUMP domain.

Belongs to the methyltransferase superfamily. RlmKL family.

Its subcellular location is the cytoplasm. It catalyses the reaction guanosine(2445) in 23S rRNA + S-adenosyl-L-methionine = N(2)-methylguanosine(2445) in 23S rRNA + S-adenosyl-L-homocysteine + H(+). The catalysed reaction is guanosine(2069) in 23S rRNA + S-adenosyl-L-methionine = N(2)-methylguanosine(2069) in 23S rRNA + S-adenosyl-L-homocysteine + H(+). Its function is as follows. Specifically methylates the guanine in position 2445 (m2G2445) and the guanine in position 2069 (m7G2069) of 23S rRNA. The protein is Ribosomal RNA large subunit methyltransferase K/L of Shewanella sp. (strain MR-7).